The chain runs to 276 residues: Small ribosomal subunit protein uS2 (276 aa).

The protein belongs to the universal ribosomal protein uS2 family.

This Chlamydia caviae (strain ATCC VR-813 / DSM 19441 / 03DC25 / GPIC) (Chlamydophila caviae) protein is Small ribosomal subunit protein uS2.